The primary structure comprises 208 residues: Uracil phosphoribosyltransferase (208 aa).

5-phospho-alpha-D-ribose 1-diphosphate is bound by residues Arg-78, Arg-103, and 130-138 (DPMLATGGS). Uracil is bound by residues Ile-193 and 198–200 (GDA). Asp-199 contributes to the 5-phospho-alpha-D-ribose 1-diphosphate binding site.

This sequence belongs to the UPRTase family. It depends on Mg(2+) as a cofactor.

The catalysed reaction is UMP + diphosphate = 5-phospho-alpha-D-ribose 1-diphosphate + uracil. The protein operates within pyrimidine metabolism; UMP biosynthesis via salvage pathway; UMP from uracil: step 1/1. Allosterically activated by GTP. Its function is as follows. Catalyzes the conversion of uracil and 5-phospho-alpha-D-ribose 1-diphosphate (PRPP) to UMP and diphosphate. The polypeptide is Uracil phosphoribosyltransferase (Desulfovibrio desulfuricans (strain ATCC 27774 / DSM 6949 / MB)).